We begin with the raw amino-acid sequence, 146 residues long: uncharacterized protein (146 aa).

A helical transmembrane segment spans residues 7-27 (FVLSITIVLVILIIIAFIWYN).

It belongs to the asfivirus E146L family.

It localises to the host membrane. The protein localises to the virion. This is an uncharacterized protein from African swine fever virus (strain Badajoz 1971 Vero-adapted) (Ba71V).